Consider the following 539-residue polypeptide: Phosphoenolpyruvate carboxykinase (ATP) (539 aa).

R61, Y195, and K201 together coordinate substrate. ATP is bound by residues K201, H220, and 238-246 (GLSGTGKTT). K201 and H220 together coordinate Mn(2+). D259 is a Mn(2+) binding site. Positions 287, 325, and 450 each coordinate ATP. R325 lines the substrate pocket.

Belongs to the phosphoenolpyruvate carboxykinase (ATP) family. The cofactor is Mn(2+).

It is found in the cytoplasm. It catalyses the reaction oxaloacetate + ATP = phosphoenolpyruvate + ADP + CO2. Its pathway is carbohydrate biosynthesis; gluconeogenesis. Its function is as follows. Involved in the gluconeogenesis. Catalyzes the conversion of oxaloacetate (OAA) to phosphoenolpyruvate (PEP) through direct phosphoryl transfer between the nucleoside triphosphate and OAA. The protein is Phosphoenolpyruvate carboxykinase (ATP) of Methylorubrum extorquens (strain CM4 / NCIMB 13688) (Methylobacterium extorquens).